Consider the following 43-residue polypeptide: Defensin (43 aa).

Cystine bridges form between C3/C34, C20/C39, and C24/C41.

It is found in the secreted. Its function is as follows. Antibacterial peptide. Affects Gram-negative bacteria including methicillin-resistant Staphylococcus aureus. This is Defensin from Trypoxylus dichotomus (Japanese rhinoceros beetle).